We begin with the raw amino-acid sequence, 224 residues long: 7-cyano-7-deazaguanine synthase (224 aa).

ATP is bound at residue 9–19 (LSGGLDSATVL). Cysteine 189, cysteine 199, cysteine 202, and cysteine 205 together coordinate Zn(2+).

This sequence belongs to the QueC family. Requires Zn(2+) as cofactor.

It catalyses the reaction 7-carboxy-7-deazaguanine + NH4(+) + ATP = 7-cyano-7-deazaguanine + ADP + phosphate + H2O + H(+). Its pathway is purine metabolism; 7-cyano-7-deazaguanine biosynthesis. Its function is as follows. Catalyzes the ATP-dependent conversion of 7-carboxy-7-deazaguanine (CDG) to 7-cyano-7-deazaguanine (preQ(0)). The protein is 7-cyano-7-deazaguanine synthase of Ralstonia nicotianae (strain ATCC BAA-1114 / GMI1000) (Ralstonia solanacearum).